Consider the following 395-residue polypeptide: DNA polymerase IV (395 aa).

A UmuC domain is found at 7-187 (FFHVDIDAFF…LPLKDVWGVG (181 aa)). Positions 11 and 105 each coordinate Mg(2+). Residue Glu-106 is part of the active site.

Belongs to the DNA polymerase type-Y family. In terms of assembly, monomer. Mg(2+) is required as a cofactor.

The protein localises to the cytoplasm. It carries out the reaction DNA(n) + a 2'-deoxyribonucleoside 5'-triphosphate = DNA(n+1) + diphosphate. Its function is as follows. Poorly processive, error-prone DNA polymerase involved in untargeted mutagenesis. Copies undamaged DNA at stalled replication forks, which arise in vivo from mismatched or misaligned primer ends. These misaligned primers can be extended by PolIV. Exhibits no 3'-5' exonuclease (proofreading) activity. May be involved in translesional synthesis, in conjunction with the beta clamp from PolIII. In Treponema denticola (strain ATCC 35405 / DSM 14222 / CIP 103919 / JCM 8153 / KCTC 15104), this protein is DNA polymerase IV.